The sequence spans 405 residues: MERLQKQPLTSPGSVSPSRDSSVPGSPSSIVAKMDNQVLGYKDLAAIPKDKAILDIERPDLMIYEPHFTYSLLEHVELPRSRERSLSPKSTSPPPSPEVWADSRSPGIISQASAPRTTGTPRTSLPHFHHPETSRPDSNIYKKPPIYKQRESVGGSPQTKHLIEDLIIESSKFPAAQPPDPNQPAKIETDYWPCPPSLAVVETEWRKRKASRRGAEEEEEEEDDDSGEEMKALRERQREELSKVTSNLGKMILKEEMEKSLPIRRKTRSLPDRTPFHTSLHQGTSKSSSLPAYGRTTLSRLQSTEFSPSGSETGSPGLQNGEGQRGRMDRGNSLPCVLEQKIYPYEMLVVTNKGRTKLPPGVDRMRLERHLSAEDFSRVFAMSPEEFGKLALWKRNELKKKASLF.

Disordered stretches follow at residues 1–30 (MERL…PSSI), 79–158 (PRSR…GSPQ), 173–192 (FPAA…TDYW), and 203–332 (TEWR…DRGN). Over residues 11-29 (SPGSVSPSRDSSVPGSPSS) the composition is skewed to low complexity. A phosphoserine mark is found at Ser16, Ser18, Ser26, Ser92, Ser96, Ser105, Ser110, Ser113, and Ser156. Positions 108-123 (IISQASAPRTTGTPRT) are enriched in polar residues. Positions 216 to 227 (EEEEEEEDDDSG) are enriched in acidic residues. Positions 224-308 (DDSGEEMKAL…SRLQSTEFSP (85 aa)) are interaction with RASGRF2. Position 226 is a phosphoserine (Ser226). 2 stretches are compositionally biased toward basic and acidic residues: residues 228 to 242 (EEMK…EELS) and 252 to 261 (ILKEEMEKSL). 8 positions are modified to phosphoserine: Ser269, Ser279, Ser289, Ser303, Ser315, Ser333, Ser372, and Ser383. A compositionally biased stretch (polar residues) spans 276–322 (FHTSLHQGTSKSSSLPAYGRTTLSRLQSTEFSPSGSETGSPGLQNGE). Residues 337 to 405 (VLEQKIYPYE…NELKKKASLF (69 aa)) form the HP domain. A Phosphoserine; by PKA modification is found at Ser403.

It belongs to the villin/gelsolin family. As to quaternary structure, monomeric (isoform 2); under reducing conditions. Self-associates. Exists under oxidizing condition as a trimer of two isoforms 2 and isoform 1 linked by disulfide bonds. Found in a complex with DMTN, F-actin and spectrin. Found in a complex with ADD2, DMTN and SLC2A1. Interacts with F-actin, ITPKB, RASGRF2 and spectrin. Isoform 2 interacts with SLC2A1 (via C-terminus cytoplasmic region). Isoform 1 and isoform 2 interact (phosphorylated form) with plasmodium berghei 14-3-3 protein; the interaction occurs in a PKA-dependent manner. Post-translationally, phosphorylated. Phosphorylation at Ser-403 by PKA causes the C-terminal headpiece domain to associate with the N-terminal core domain, and leads to the inhibition of its actin bundling activity. The N-terminus is blocked. As to expression, expressed in platelets (at protein level). Expressed in heart, brain, lung, skeletal muscle, and kidney.

Its subcellular location is the cytoplasm. It localises to the cytosol. The protein resides in the perinuclear region. It is found in the cytoskeleton. The protein localises to the cell membrane. Its subcellular location is the membrane. It localises to the endomembrane system. The protein resides in the cell projection. In terms of biological role, membrane-cytoskeleton-associated protein with F-actin-binding activity that induces F-actin bundles formation and stabilization. Its F-actin-bundling activity is reversibly regulated upon its phosphorylation by the cAMP-dependent protein kinase A (PKA). Binds to the erythrocyte membrane glucose transporter-1 SLC2A1/GLUT1, and hence stabilizes and attaches the spectrin-actin network to the erythrocytic plasma membrane. Plays a role in maintaining the functional integrity of PKA-activated erythrocyte shape and the membrane mechanical properties. Also plays a role as a modulator of actin dynamics in fibroblasts; acts as a negative regulator of the RhoA activation pathway. In platelets, functions as a regulator of internal calcium mobilization across the dense tubular system that affects platelet granule secretion pathways and aggregation. Also required for the formation of a diverse set of cell protrusions, such as filopodia and lamellipodia, necessary for platelet cell spreading, motility and migration. Acts as a tumor suppressor and inhibits malignant cell transformation. The chain is Dematin (DMTN) from Homo sapiens (Human).